The sequence spans 4836 residues: E3 ubiquitin-protein ligase HERC2 (4836 aa).

Positions 58–90 (LPLRKDDGVDAQSGTKKEDLNDKEKKEEEETPA) are disordered. Basic and acidic residues predominate over residues 72–85 (TKKEDLNDKEKKEE). The residue at position 273 (Thr273) is a Phosphothreonine. An RCC1 1-1 repeat occupies 416–462 (PTSHKGSLQEVIGWGLIGWKYYANVIGPIQCEGLASLGVMQVACAEK). An RCC1 1-2 repeat occupies 463-513 (RFLILSRNGRVYTQAYNSDMLAPQLVQGLASRNIVKIAAHSDGHHYLALAA). The stretch at 514 to 569 (TGEVYSWGCGDGGRLGHGDTVPLEEPKVISAFSGKQAGKHVVHIACGSTYSAAITA) is one RCC1 1-3 repeat. The stretch at 570–621 (EGELYTWGRGNYGRLGHGSSEDEAIPMLVAGLKGLKVIDVACGSGDAQTLAV) is one RCC1 1-4 repeat. An RCC1 1-5 repeat occupies 624–675 (NGQVWSWGDGDYGKLGRGGSDGCKTPKLIEKLQDLDVIKVRCGSQFSIALTK). At Thr648 the chain carries Phosphothreonine. Residues 676–727 (DGQVYSWGKGDNQRLGHGTEEHVRYPKLLEGLQGKKVIDVAAGSTHCLALTE) form an RCC1 1-6 repeat. One copy of the RCC1 1-7 repeat lies at 729 to 779 (SEVHSWGSNDQCQHFDTLRVTKPEPTALPGLDSKHIVGIACGPAQSFAWSS). Residues 948–981 (ALNAAITAEIQDIEAKKEAQKEKEIDEQEASAST) are a coiled coil. Positions 1208 to 1284 (VTLIRKADLE…MHAFCVGQYL (77 aa)) constitute a Cytochrome b5 heme-binding domain. Residue Ser1578 is modified to Phosphoserine. Residues 1860–1933 (SGPELAAMMK…KYDLKLVELP (74 aa)) enclose the MIB/HERC2 domain. Residue Ser1943 is modified to Phosphoserine. Thr1945 bears the Phosphothreonine mark. The disordered stretch occupies residues 2351 to 2376 (GTGTLQTDDGAAASPDLGDMSPEGPQ). Ser2455 carries the phosphoserine modification. Positions 2555–2631 (RADFLSNDDY…RYIHVELIGY (77 aa)) constitute a CPH domain. The ZZ-type zinc finger occupies 2704–2756 (HPGVTCDGCQTFPINGSRFKCRNCDDFDFCETCFKTKKHNTRHTFGRINEPGQ). Cys2709, Cys2712, Cys2724, Cys2727, Cys2733, Cys2736, His2742, and His2746 together coordinate Zn(2+). A DOC domain is found at 2760-2937 (FCGRSGKQLK…ASDNEEEEDD (178 aa)). Residues 2928–2947 (ASDNEEEEDDKGSTGSLIRK) form a disordered region. Ser2929 carries the phosphoserine modification. The stretch at 2959-3010 (RTKVFVWGLNDKDQLGGLKGSKIKVPSFSETLSALNVVQVAGGSKSLFAVTV) is one RCC1 2-1 repeat. An RCC1 2-2 repeat occupies 3011–3065 (EGKVYSCGEATNGRLGLGMSSGTVPIPRQITALSSYVVKKVAVHSGGRHATALTV). One copy of the RCC1 2-3 repeat lies at 3066–3117 (DGKVFSWGEGDDGKLGHFSRMNCDKPRLIEALKTKRIRDIACGSSHSAALTS). One copy of the RCC1 2-4 repeat lies at 3119–3169 (GELYTWGLGEYGRLGHGDNTTQLKPKMVKVLLGHRVIQVACGSRDAQTLAL). An RCC1 2-5 repeat occupies 3172–3223 (EGLVFSWGDGDFGKLGRGGSEGCNIPQNIERLNGQGVCQIECGAQFSLALTK). The stretch at 3225–3275 (GVVWTWGKGDYFRLGHGSDVHVRKPQVVEGLRGKKIVHVAVGALHCLAVTD) is one RCC1 2-6 repeat. An RCC1 2-7 repeat occupies 3276–3327 (SGQVYAWGDNDHGQQGNGTTTVNRKPTLVQGLEGQKITRVACGSSHSVAWTT). Disordered stretches follow at residues 3479-3499 (DAVTPSAVTPSAPSASSRPFI), 3517-3537 (KTKEDVESQNKTSGPEPQSLD), and 3604-3632 (SQSGRLSSQPVVVESSHPYTDDTSTSGTV). Low complexity predominate over residues 3480–3495 (AVTPSAVTPSAPSASS). Polar residues-rich tracts occupy residues 3604 to 3613 (SQSGRLSSQP) and 3620 to 3631 (HPYTDDTSTSGT). The RCC1 3-1 repeat unit spans residues 3953-4004 (SGTIYGWGHNHRGQLGGIEGAKVKVPTPCEALATLRPVQLIGGEQTLFAVTA). One copy of the RCC1 3-2 repeat lies at 4006–4058 (GKLYATGYGAGGRLGIGGTESVSTPTLLESIQHVFIKKVAVNSGGKHCLALSS). One copy of the RCC1 3-3 repeat lies at 4060–4110 (GEVYSWGEAEDGKLGHGNRSPCDRPRVIESLRGIEVVDVAAGGAHSACVTA). An RCC1 3-4 repeat occupies 4112–4164 (GDLYTWGKGRYGRLGHSDSEDQLKPKLVEALQGHRVIDIACGSGDAQTLCLTD). An RCC1 3-5 repeat occupies 4166–4216 (DTVWSWGDGDYGKLGRGGSDGCKVPMKIDSLTGLGVVKVECGSQFSVALTK). The stretch at 4218–4268 (GAVYTWGKGDYHRLGHGSDDHVRRPRQVQGLQGKKVIAIATGSLHCVCCTE) is one RCC1 3-6 repeat. The RCC1 3-7 repeat unit spans residues 4270-4320 (GEVYTWGDNDEGQLGDGTTNAIQRPRLVAALQGKKVNRVACGSAHTLAWST). The HECT domain maps to 4459–4796 (DSLLLPHRVW…IHFCKSIDTD (338 aa)). Cys4764 functions as the Glycyl thioester intermediate in the catalytic mechanism. The disordered stretch occupies residues 4806-4836 (EPAADDSSEDSDNEDADSFASDSTQDYLTGH). Residues 4808–4822 (AADDSSEDSDNEDAD) show a composition bias toward acidic residues. Phosphoserine occurs at positions 4812, 4813, and 4816. Residue Thr4829 is modified to Phosphothreonine.

As to quaternary structure, interacts (when phosphorylated at Thr-4829 and sumoylated) with RNF8 (via FHA domain); this interaction increases after ionising radiation (IR) treatment. Interacts with XPA. Interacts with NEURL4. Via its interaction with NEURL4, may indirectly interact with CCP110 and CEP97. Post-translationally, phosphorylation at Thr-4829 is required for interaction with RNF8. Sumoylated with SUMO1 by PIAS4 in response to double-strand breaks (DSBs), promoting the interaction with RNF8. In terms of tissue distribution, highest levels are found in brain and testis with lower levels in heart, lung, liver, skeletal muscle and kidney. Little expression detected in spleen.

The protein resides in the cytoplasm. Its subcellular location is the cytoskeleton. It is found in the microtubule organizing center. The protein localises to the centrosome. It localises to the centriole. The protein resides in the nucleus. The enzyme catalyses S-ubiquitinyl-[E2 ubiquitin-conjugating enzyme]-L-cysteine + [acceptor protein]-L-lysine = [E2 ubiquitin-conjugating enzyme]-L-cysteine + N(6)-ubiquitinyl-[acceptor protein]-L-lysine.. The protein operates within protein modification; protein ubiquitination. Its function is as follows. E3 ubiquitin-protein ligase that regulates ubiquitin-dependent retention of repair proteins on damaged chromosomes. Recruited to sites of DNA damage in response to ionizing radiation (IR) and facilitates the assembly of UBE2N and RNF8 promoting DNA damage-induced formation of 'Lys-63'-linked ubiquitin chains. Acts as a mediator of binding specificity between UBE2N and RNF8. Involved in the maintenance of RNF168 levels. E3 ubiquitin-protein ligase that promotes the ubiquitination and proteasomal degradation of XPA which influences the circadian oscillation of DNA excision repair activity. By controlling the steady-state expression of the IGF1R receptor, indirectly regulates the insulin-like growth factor receptor signaling pathway. Also modulates iron metabolism by regulating the basal turnover of FBXL5. The sequence is that of E3 ubiquitin-protein ligase HERC2 from Mus musculus (Mouse).